Here is a 448-residue protein sequence, read N- to C-terminus: Beta-glucosidase A (448 aa).

Catalysis depends on E166, which acts as the Proton donor. Residue E352 is the Nucleophile of the active site.

This sequence belongs to the glycosyl hydrolase 1 family. In terms of assembly, homooctamer.

It catalyses the reaction Hydrolysis of terminal, non-reducing beta-D-glucosyl residues with release of beta-D-glucose.. In terms of biological role, bglA is intracellular and cleaves cellobiose probably through inorganic phosphate mediated hydrolysis. In Paenibacillus polymyxa (Bacillus polymyxa), this protein is Beta-glucosidase A (bglA).